Here is a 607-residue protein sequence, read N- to C-terminus: Aspartate--tRNA(Asp/Asn) ligase (607 aa).

An L-aspartate-binding site is contributed by Glu-173. Residues 197–200 (QLFK) are aspartate. Residue Arg-219 participates in L-aspartate binding. ATP is bound by residues 219-221 (RDE) and Gln-228. Residue His-456 participates in L-aspartate binding. Position 498 (Glu-498) interacts with ATP. Arg-505 lines the L-aspartate pocket. 550–553 (GLDR) serves as a coordination point for ATP.

It belongs to the class-II aminoacyl-tRNA synthetase family. Type 1 subfamily. In terms of assembly, homodimer.

The protein localises to the cytoplasm. The catalysed reaction is tRNA(Asx) + L-aspartate + ATP = L-aspartyl-tRNA(Asx) + AMP + diphosphate. Its function is as follows. Aspartyl-tRNA synthetase with relaxed tRNA specificity since it is able to aspartylate not only its cognate tRNA(Asp) but also tRNA(Asn). Reaction proceeds in two steps: L-aspartate is first activated by ATP to form Asp-AMP and then transferred to the acceptor end of tRNA(Asp/Asn). The polypeptide is Aspartate--tRNA(Asp/Asn) ligase (Magnetococcus marinus (strain ATCC BAA-1437 / JCM 17883 / MC-1)).